The sequence spans 139 residues: Nucleoside diphosphate kinase (139 aa).

Residues K11, F59, R87, T93, R104, and N114 each contribute to the ATP site. The Pros-phosphohistidine intermediate role is filled by H117.

Belongs to the NDK family. As to quaternary structure, homotetramer. The cofactor is Mg(2+).

Its subcellular location is the cytoplasm. It carries out the reaction a 2'-deoxyribonucleoside 5'-diphosphate + ATP = a 2'-deoxyribonucleoside 5'-triphosphate + ADP. The catalysed reaction is a ribonucleoside 5'-diphosphate + ATP = a ribonucleoside 5'-triphosphate + ADP. Its function is as follows. Major role in the synthesis of nucleoside triphosphates other than ATP. The ATP gamma phosphate is transferred to the NDP beta phosphate via a ping-pong mechanism, using a phosphorylated active-site intermediate. The sequence is that of Nucleoside diphosphate kinase from Wolbachia pipientis wMel.